The chain runs to 249 residues: NAD(P)H-quinone oxidoreductase subunit T, chloroplastic (249 aa).

Residues 1-45 (MAYATSTYARTSCIILPKIQNGAHFTDDTKAFRRITARRVTRIYA) constitute a chloroplast transit peptide. A disordered region spans residues 44–84 (YASQGPTKPSKPSPGVDTRIHWESPDEGWIGGRSDPAKSVD). Residues 106–172 (SHYQFLGVST…ETRRFYDWTL (67 aa)) form the J domain. Residues 224–244 (LTFDILIVLFAVCCIAFVIVF) traverse the membrane as a helical segment.

As to quaternary structure, part of the chloroplast NDH complex, composed of a mixture of chloroplast and nucleus encoded subunits. Component of the electron donor-binding subcomplex, at least composed of NDHS, NDHT and NDHU.

The protein localises to the plastid. Its subcellular location is the chloroplast thylakoid membrane. It catalyses the reaction a plastoquinone + NADH + (n+1) H(+)(in) = a plastoquinol + NAD(+) + n H(+)(out). It carries out the reaction a plastoquinone + NADPH + (n+1) H(+)(in) = a plastoquinol + NADP(+) + n H(+)(out). Its function is as follows. NDH shuttles electrons from NAD(P)H:plastoquinone, via FMN and iron-sulfur (Fe-S) centers, to quinones in the photosynthetic chain and possibly in a chloroplast respiratory chain. The immediate electron acceptor for the enzyme in this species is believed to be plastoquinone. Couples the redox reaction to proton translocation, and thus conserves the redox energy in a proton gradient. Required for the accumulation of both the NDH subcomplex A and NDHS. The sequence is that of NAD(P)H-quinone oxidoreductase subunit T, chloroplastic from Arabidopsis thaliana (Mouse-ear cress).